Consider the following 182-residue polypeptide: Oligoribonuclease (182 aa).

One can recognise an Exonuclease domain in the interval 8–171 (LIWIDLEMTG…DDIRESIKEL (164 aa)). The active site involves Tyr-129.

This sequence belongs to the oligoribonuclease family.

It localises to the cytoplasm. Its function is as follows. 3'-to-5' exoribonuclease specific for small oligoribonucleotides. The chain is Oligoribonuclease from Haemophilus influenzae (strain PittGG).